A 302-amino-acid polypeptide reads, in one-letter code: Taste receptor type 2 member 104 (302 aa).

The Extracellular segment spans residues 1–7 (MLSMLES). The helical transmembrane segment at 8–28 (ILLSVATSEAMLGILGNIFIV) threads the bilayer. Over 29-43 (LVNCTNWVRNKKLSK) the chain is Cytoplasmic. A helical transmembrane segment spans residues 44 to 64 (INFILTGLAISRVFTIWIITL). The Extracellular portion of the chain corresponds to 65–87 (DAYTKVFFLTTLMPSNLHECISY). A helical membrane pass occupies residues 88–108 (IWVIINHLSVWFATSLSIFYF). The Cytoplasmic portion of the chain corresponds to 109 to 128 (LKIANFSHYIFLWLKRRADK). Residues 129 to 149 (VFVFLIGYLIITWLASFPLAV) traverse the membrane as a helical segment. At 150-182 (TVIKNIKVHHNNTSWLIQLEKRELLINYVFANM) the chain is on the extracellular side. 2 N-linked (GlcNAc...) asparagine glycosylation sites follow: Asn-160 and Asn-161. Residues 183 to 203 (GPISLFMVAVFTCFLLTISLW) traverse the membrane as a helical segment. Over 204-233 (RHRRRMQSTGSKFRDLNTEVHVKAMKVLIS) the chain is Cytoplasmic. Residues 234 to 254 (FIILFILYFMGVLIETLCLFL) traverse the membrane as a helical segment. Residues 255 to 257 (TEN) lie on the Extracellular side of the membrane. A helical transmembrane segment spans residues 258 to 278 (ILLFIFGFTLSSTYPCCHSFI). The Cytoplasmic portion of the chain corresponds to 279-302 (LILTSRELKQASMRALQRLKCCET).

It belongs to the G-protein coupled receptor T2R family.

The protein resides in the membrane. Functionally, putative taste receptor which may play a role in the perception of bitterness. This is Taste receptor type 2 member 104 from Rattus norvegicus (Rat).